The primary structure comprises 313 residues: MNATYRHITVLLEEAVSALAPREDGCYLDGTFGRGGHSRALLEKLGAGGRLLGFDKDPQAIQTGKALAAEDGRFVIVQRSFAELGDEVRARGLEGRIDGVLLDLGVSSPQLDDPERGFSFLNDGPLDMRMNPGQGISAAEFIANAAEEEIARVFKEYGEERFAKRMARAIVQRRQERPFERTADLAEVITVANPAWEKGKNPATRAFQGLRIHVNNELGDLERGLDAALESLAVGGRLVVISFHSLEDRIVKLFMRKHAKGEADNLPRDLPIRSKVFEPRLKLLGKPQYASEEELKANPRSRSAVMRVAEKLR.

S-adenosyl-L-methionine is bound by residues 35 to 37 (GGH), aspartate 55, phenylalanine 81, aspartate 103, and glutamine 110.

This sequence belongs to the methyltransferase superfamily. RsmH family.

Its subcellular location is the cytoplasm. The catalysed reaction is cytidine(1402) in 16S rRNA + S-adenosyl-L-methionine = N(4)-methylcytidine(1402) in 16S rRNA + S-adenosyl-L-homocysteine + H(+). Its function is as follows. Specifically methylates the N4 position of cytidine in position 1402 (C1402) of 16S rRNA. This is Ribosomal RNA small subunit methyltransferase H from Pseudomonas aeruginosa (strain LESB58).